Consider the following 155-residue polypeptide: 6,7-dimethyl-8-ribityllumazine synthase (155 aa).

5-amino-6-(D-ribitylamino)uracil contacts are provided by residues phenylalanine 23, 57-59 (AFE), and 81-83 (AVI). 86–87 (AT) contacts (2S)-2-hydroxy-3-oxobutyl phosphate. Histidine 89 (proton donor) is an active-site residue. Residue phenylalanine 114 coordinates 5-amino-6-(D-ribitylamino)uracil. Arginine 128 serves as a coordination point for (2S)-2-hydroxy-3-oxobutyl phosphate.

Belongs to the DMRL synthase family.

The catalysed reaction is (2S)-2-hydroxy-3-oxobutyl phosphate + 5-amino-6-(D-ribitylamino)uracil = 6,7-dimethyl-8-(1-D-ribityl)lumazine + phosphate + 2 H2O + H(+). The protein operates within cofactor biosynthesis; riboflavin biosynthesis; riboflavin from 2-hydroxy-3-oxobutyl phosphate and 5-amino-6-(D-ribitylamino)uracil: step 1/2. Functionally, catalyzes the formation of 6,7-dimethyl-8-ribityllumazine by condensation of 5-amino-6-(D-ribitylamino)uracil with 3,4-dihydroxy-2-butanone 4-phosphate. This is the penultimate step in the biosynthesis of riboflavin. The polypeptide is 6,7-dimethyl-8-ribityllumazine synthase (Pelotomaculum thermopropionicum (strain DSM 13744 / JCM 10971 / SI)).